Reading from the N-terminus, the 560-residue chain is MSTSVFNRRWATLLLESLTRHGVRHVCIAPGSRSTPLTLSAADNHALICHTHFDERGLGHLALGLAKASREPVAIIVTSGTAAANLYPAIIEAGLTGERLVVLTADRPPELIDCGANQAIRQHALYASHPTLALDLPRPTPDIPASWLVSSVDSAMARLAHGALHINCPFAEPLYGADDGTAYQDWLIALGDWWSSREPWLREMRQSALAEQPDWPQWRQKRGVVLVGRVSPEQGARLAAWANELGWPLIGDVLSQSGQPLPCADIWLAHPDAADRLRQAEIVLQFGGSLTGKRLLQWQEQCQPQEFWLIDDLPGRLDPAHHRGRRLVADVGEWLSAHPAHKQAPWADMLVDIADKTQRQIDTHLASRFGEAQLAQRIPALLPPDGQLFVGNSLVVRLIDALAQLPQGYPVYGNRGASGIDGLISTLAGVQRATAKPMLGIVGDLSALYDLNALALLRQAPAPLVLIVVNNNGGQIFSLLPTPVAQRETFYCMPQNVEFGHAAAMFGLNYVRADNWEQLANTVTDCWAQGGVTLLEVVVEPKDGAATLNELVAQVATWAH.

This sequence belongs to the TPP enzyme family. MenD subfamily. As to quaternary structure, homodimer. It depends on Mg(2+) as a cofactor. Requires Mn(2+) as cofactor. Thiamine diphosphate is required as a cofactor.

It carries out the reaction isochorismate + 2-oxoglutarate + H(+) = 5-enolpyruvoyl-6-hydroxy-2-succinyl-cyclohex-3-ene-1-carboxylate + CO2. It participates in quinol/quinone metabolism; 1,4-dihydroxy-2-naphthoate biosynthesis; 1,4-dihydroxy-2-naphthoate from chorismate: step 2/7. The protein operates within quinol/quinone metabolism; menaquinone biosynthesis. Catalyzes the thiamine diphosphate-dependent decarboxylation of 2-oxoglutarate and the subsequent addition of the resulting succinic semialdehyde-thiamine pyrophosphate anion to isochorismate to yield 2-succinyl-5-enolpyruvyl-6-hydroxy-3-cyclohexene-1-carboxylate (SEPHCHC). The polypeptide is 2-succinyl-5-enolpyruvyl-6-hydroxy-3-cyclohexene-1-carboxylate synthase (Pectobacterium carotovorum subsp. carotovorum (strain PC1)).